The sequence spans 521 residues: Bifunctional purine biosynthesis protein PurH (521 aa).

One can recognise an MGS-like domain in the interval 1 to 145 (MIKQALISVS…KNHKDVIVIC (145 aa)).

The protein belongs to the PurH family.

The catalysed reaction is (6R)-10-formyltetrahydrofolate + 5-amino-1-(5-phospho-beta-D-ribosyl)imidazole-4-carboxamide = 5-formamido-1-(5-phospho-D-ribosyl)imidazole-4-carboxamide + (6S)-5,6,7,8-tetrahydrofolate. It carries out the reaction IMP + H2O = 5-formamido-1-(5-phospho-D-ribosyl)imidazole-4-carboxamide. Its pathway is purine metabolism; IMP biosynthesis via de novo pathway; 5-formamido-1-(5-phospho-D-ribosyl)imidazole-4-carboxamide from 5-amino-1-(5-phospho-D-ribosyl)imidazole-4-carboxamide (10-formyl THF route): step 1/1. The protein operates within purine metabolism; IMP biosynthesis via de novo pathway; IMP from 5-formamido-1-(5-phospho-D-ribosyl)imidazole-4-carboxamide: step 1/1. The sequence is that of Bifunctional purine biosynthesis protein PurH from Herminiimonas arsenicoxydans.